We begin with the raw amino-acid sequence, 441 residues long: Histidinol dehydrogenase (441 aa).

Substrate contacts are provided by Thr-240, Gln-262, and His-265. Positions 262 and 265 each coordinate Zn(2+). Catalysis depends on proton acceptor residues Glu-332 and His-333. Substrate-binding residues include His-333, Asp-366, Glu-420, and His-425. Residue Asp-366 coordinates Zn(2+). His-425 contributes to the Zn(2+) binding site.

Belongs to the histidinol dehydrogenase family. Zn(2+) serves as cofactor.

It catalyses the reaction L-histidinol + 2 NAD(+) + H2O = L-histidine + 2 NADH + 3 H(+). The protein operates within amino-acid biosynthesis; L-histidine biosynthesis; L-histidine from 5-phospho-alpha-D-ribose 1-diphosphate: step 9/9. Catalyzes the sequential NAD-dependent oxidations of L-histidinol to L-histidinaldehyde and then to L-histidine. This Streptomyces avermitilis (strain ATCC 31267 / DSM 46492 / JCM 5070 / NBRC 14893 / NCIMB 12804 / NRRL 8165 / MA-4680) protein is Histidinol dehydrogenase.